A 451-amino-acid polypeptide reads, in one-letter code: Glyceraldehyde-3-phosphate dehydrogenase B, chloroplastic (451 aa).

Residues Met-1–Ser-25 form a disordered region. Residues Met-1–Ala-84 constitute a chloroplast transit peptide. Positions Arg-11–Ser-25 are enriched in polar residues. NADP(+) contacts are provided by residues Arg-95–Ile-96, Asp-119, and Arg-164. Residues Ser-238 to Thr-240, Thr-269, Arg-284, Thr-297 to Gly-298, and Arg-320 contribute to the D-glyceraldehyde 3-phosphate site. Cys-239 serves as the catalytic Nucleophile. NADP(+) is bound at residue Asn-403.

This sequence belongs to the glyceraldehyde-3-phosphate dehydrogenase family. In terms of assembly, tetramer of either four A chains (GAPDH 2) or two A and two B chains (GAPDH 1).

The protein localises to the plastid. The protein resides in the chloroplast. It carries out the reaction D-glyceraldehyde 3-phosphate + phosphate + NADP(+) = (2R)-3-phospho-glyceroyl phosphate + NADPH + H(+). Its pathway is carbohydrate biosynthesis; Calvin cycle. The chain is Glyceraldehyde-3-phosphate dehydrogenase B, chloroplastic (GAPB) from Pisum sativum (Garden pea).